The sequence spans 138 residues: Glutathione S-transferase Mu 5 (138 aa).

Serine 1 is modified (phosphoserine). The GST N-terminal domain occupies serine 1–arginine 71. Glutathione contacts are provided by residues tyrosine 6–tryptophan 7, tryptophan 39–lysine 43, asparagine 52–leucine 53, and glutamine 65–serine 66. In terms of domain architecture, GST C-terminal spans isoleucine 72 to isoleucine 135.

The protein belongs to the GST superfamily. Mu family. As to quaternary structure, homodimer.

It localises to the cytoplasm. It catalyses the reaction RX + glutathione = an S-substituted glutathione + a halide anion + H(+). Its function is as follows. Conjugation of reduced glutathione to a wide number of exogenous and endogenous hydrophobic electrophiles. The polypeptide is Glutathione S-transferase Mu 5 (Mesocricetus auratus (Golden hamster)).